A 185-amino-acid chain; its full sequence is Large ribosomal subunit protein uL22 (185 aa).

It belongs to the universal ribosomal protein uL22 family. In terms of assembly, component of the large ribosomal subunit. Mature ribosomes consist of a small (40S) and a large (60S) subunit. The 40S subunit contains about 32 different proteins and 1 molecule of RNA (18S). The 60S subunit contains 45 different proteins and 3 molecules of RNA (25S, 5.8S and 5S).

It is found in the cytoplasm. Component of the ribosome, a large ribonucleoprotein complex responsible for the synthesis of proteins in the cell. The small ribosomal subunit (SSU) binds messenger RNAs (mRNAs) and translates the encoded message by selecting cognate aminoacyl-transfer RNA (tRNA) molecules. The large subunit (LSU) contains the ribosomal catalytic site termed the peptidyl transferase center (PTC), which catalyzes the formation of peptide bonds, thereby polymerizing the amino acids delivered by tRNAs into a polypeptide chain. The nascent polypeptides leave the ribosome through a tunnel in the LSU and interact with protein factors that function in enzymatic processing, targeting, and the membrane insertion of nascent chains at the exit of the ribosomal tunnel. The polypeptide is Large ribosomal subunit protein uL22 (Candida albicans (strain SC5314 / ATCC MYA-2876) (Yeast)).